The primary structure comprises 85 residues: U4-theraphotoxin-Hhn1i (85 aa).

The signal sequence occupies residues 1-22 (MKVTLIAILTCAAVLVLHTTAA). The propeptide occupies 23–48 (EELEAESQLMEVGMPDTELAAVDEER). Disulfide bonds link cysteine 52–cysteine 66, cysteine 56–cysteine 77, and cysteine 71–cysteine 82.

This sequence belongs to the neurotoxin 12 (Hwtx-2) family. 02 (Hwtx-2) subfamily. In terms of tissue distribution, expressed by the venom gland.

The protein resides in the secreted. Its function is as follows. Postsynaptic neurotoxin. The chain is U4-theraphotoxin-Hhn1i from Cyriopagopus hainanus (Chinese bird spider).